The chain runs to 140 residues: Sex-regulated protein janus-B (140 aa).

R42 contacts substrate. H69 functions as the Proton acceptor in the catalytic mechanism. 110–112 lines the substrate pocket; sequence SRT.

The protein belongs to the janus family.

Functionally, janA and janB regulate somatic sex differentiation. The polypeptide is Sex-regulated protein janus-B (janB) (Drosophila simulans (Fruit fly)).